The chain runs to 310 residues: Methionyl-tRNA formyltransferase (310 aa).

Position 111 to 114 (111 to 114) interacts with (6S)-5,6,7,8-tetrahydrofolate; that stretch reads SLLP.

The protein belongs to the Fmt family.

It carries out the reaction L-methionyl-tRNA(fMet) + (6R)-10-formyltetrahydrofolate = N-formyl-L-methionyl-tRNA(fMet) + (6S)-5,6,7,8-tetrahydrofolate + H(+). Its function is as follows. Attaches a formyl group to the free amino group of methionyl-tRNA(fMet). The formyl group appears to play a dual role in the initiator identity of N-formylmethionyl-tRNA by promoting its recognition by IF2 and preventing the misappropriation of this tRNA by the elongation apparatus. This is Methionyl-tRNA formyltransferase from Rhodopseudomonas palustris (strain TIE-1).